We begin with the raw amino-acid sequence, 608 residues long: 1-deoxy-D-xylulose-5-phosphate synthase (608 aa).

Thiamine diphosphate-binding positions include H80 and 121-123 (GHS). Position 152 (D152) interacts with Mg(2+). Residues 153–154 (GA), N181, Y282, and E357 each bind thiamine diphosphate. N181 is a binding site for Mg(2+).

It belongs to the transketolase family. DXPS subfamily. In terms of assembly, homodimer. It depends on Mg(2+) as a cofactor. Requires thiamine diphosphate as cofactor.

The enzyme catalyses D-glyceraldehyde 3-phosphate + pyruvate + H(+) = 1-deoxy-D-xylulose 5-phosphate + CO2. It functions in the pathway metabolic intermediate biosynthesis; 1-deoxy-D-xylulose 5-phosphate biosynthesis; 1-deoxy-D-xylulose 5-phosphate from D-glyceraldehyde 3-phosphate and pyruvate: step 1/1. Its function is as follows. Catalyzes the acyloin condensation reaction between C atoms 2 and 3 of pyruvate and glyceraldehyde 3-phosphate to yield 1-deoxy-D-xylulose-5-phosphate (DXP). This Buchnera aphidicola subsp. Acyrthosiphon pisum (strain 5A) protein is 1-deoxy-D-xylulose-5-phosphate synthase.